Here is a 339-residue protein sequence, read N- to C-terminus: GTP 3',8-cyclase (339 aa).

Residues 20–241 enclose the Radical SAM core domain; that stretch reads NFDRKFEYLR…WTQKQSLSHD (222 aa). Position 29 (R29) interacts with GTP. [4Fe-4S] cluster is bound by residues C36 and C40. Y42 is a binding site for S-adenosyl-L-methionine. C43 contacts [4Fe-4S] cluster. R78 lines the GTP pocket. G82 lines the S-adenosyl-L-methionine pocket. Residue T109 participates in GTP binding. S133 contacts S-adenosyl-L-methionine. GTP is bound at residue K170. M204 lines the S-adenosyl-L-methionine pocket. Residues C267 and C270 each contribute to the [4Fe-4S] cluster site. 272 to 274 lines the GTP pocket; it reads RLR. Position 284 (C284) interacts with [4Fe-4S] cluster.

Belongs to the radical SAM superfamily. MoaA family. As to quaternary structure, monomer and homodimer. Requires [4Fe-4S] cluster as cofactor.

The catalysed reaction is GTP + AH2 + S-adenosyl-L-methionine = (8S)-3',8-cyclo-7,8-dihydroguanosine 5'-triphosphate + 5'-deoxyadenosine + L-methionine + A + H(+). It participates in cofactor biosynthesis; molybdopterin biosynthesis. In terms of biological role, catalyzes the cyclization of GTP to (8S)-3',8-cyclo-7,8-dihydroguanosine 5'-triphosphate. In Psychromonas ingrahamii (strain DSM 17664 / CCUG 51855 / 37), this protein is GTP 3',8-cyclase.